The primary structure comprises 186 residues: Large ribosomal subunit protein uL22 (186 aa).

Belongs to the universal ribosomal protein uL22 family. In terms of assembly, component of the large ribosomal subunit (LSU). Mature N.crassa ribosomes consist of a small (40S) and a large (60S) subunit. The 40S small subunit contains 1 molecule of ribosomal RNA (18S rRNA) and at least 32 different proteins. The large 60S subunit contains 3 rRNA molecules (26S, 5.8S and 5S rRNA) and at least 42 different proteins.

The protein localises to the cytoplasm. Component of the ribosome, a large ribonucleoprotein complex responsible for the synthesis of proteins in the cell. The small ribosomal subunit (SSU) binds messenger RNAs (mRNAs) and translates the encoded message by selecting cognate aminoacyl-transfer RNA (tRNA) molecules. The large subunit (LSU) contains the ribosomal catalytic site termed the peptidyl transferase center (PTC), which catalyzes the formation of peptide bonds, thereby polymerizing the amino acids delivered by tRNAs into a polypeptide chain. The nascent polypeptides leave the ribosome through a tunnel in the LSU and interact with protein factors that function in enzymatic processing, targeting, and the membrane insertion of nascent chains at the exit of the ribosomal tunnel. This Neurospora crassa (strain ATCC 24698 / 74-OR23-1A / CBS 708.71 / DSM 1257 / FGSC 987) protein is Large ribosomal subunit protein uL22 (rpl-17).